The chain runs to 437 residues: Cytochrome b (437 aa).

The helical transmembrane segment at 45 to 65 (WIWGIVLAFTLVLQIVTGIVL) threads the bilayer. Heme b-binding residues include histidine 97 and histidine 111. The next 9 helical transmembrane spans lie at 100-120 (GASLFFLAVYIHIFRGLYYGS), 129-149 (WIVGMVIYLLMMGTAFMGYVL), 156-176 (FWGATVITGLFGAIPGIGPSI), 194-214 (FFSLHYLLPFVIAALVAIHIW), 248-268 (FVIKDLFALALVLLGFFAVVA), 298-318 (FLPFYAILRAFAADVWVVILV), 330-350 (FFGVIAMFGAIAVMALAPWLD), 365-385 (MWFWFLVLDFVVLTWVGAMPT), and 391-411 (WISLIASTYWFAYFLVILPLL). Positions 198 and 212 each coordinate heme b.

Belongs to the cytochrome b family. As to quaternary structure, the main subunits of complex b-c1 are: cytochrome b, cytochrome c1 and the Rieske protein. Requires heme b as cofactor.

It localises to the cell membrane. In terms of biological role, component of the ubiquinol-cytochrome c reductase complex (complex III or cytochrome b-c1 complex), which is a respiratory chain that generates an electrochemical potential coupled to ATP synthesis. This is Cytochrome b (petB) from Rhodobacter capsulatus (strain ATCC BAA-309 / NBRC 16581 / SB1003).